A 605-amino-acid polypeptide reads, in one-letter code: Elongation factor 4 (605 aa).

The tr-type G domain maps to 11 to 193; the sequence is KRIRNFSIIA…RIVTQISPPK (183 aa). Residues 23–28 and 140–143 each bind GTP; these read DHGKST and NKVD.

Belongs to the TRAFAC class translation factor GTPase superfamily. Classic translation factor GTPase family. LepA subfamily.

The protein localises to the cell membrane. The enzyme catalyses GTP + H2O = GDP + phosphate + H(+). Its function is as follows. Required for accurate and efficient protein synthesis under certain stress conditions. May act as a fidelity factor of the translation reaction, by catalyzing a one-codon backward translocation of tRNAs on improperly translocated ribosomes. Back-translocation proceeds from a post-translocation (POST) complex to a pre-translocation (PRE) complex, thus giving elongation factor G a second chance to translocate the tRNAs correctly. Binds to ribosomes in a GTP-dependent manner. In Phytoplasma australiense, this protein is Elongation factor 4.